The chain runs to 282 residues: MPLEIEVSESEMKEFKESTIDDDLESVSSEETLTQSMVDVSEEDEGLYNDITVEEKPSGDGCEEIESDEGEFDYIPIFNERTIKEMLLPYSSWTEYLTNSRAILPSITFDDKSDYDLDMRGWRQFPLAPILAEKCSGIYFFLQTLSGKKLLVDGPTWVPVSWLVCTFANVIEEADTRDISVVSNEKLQRLWDERIIGPDNDRRRKEDSKARSRLTRREEHSEHHRSGKSRRERERRSSAVQEINRRHHKRYDSDDKPWGLKREDAIYQHRAGSSHGRRHHPY.

2 disordered regions span residues 1-45 and 201-259; these read MPLE…EEDE and DRRR…KPWG. The segment covering 10-19 has biased composition (basic and acidic residues); that stretch reads SEMKEFKEST. A compositionally biased stretch (polar residues) spans 26 to 38; that stretch reads SVSSEETLTQSMV. Basic and acidic residues predominate over residues 201–237; that stretch reads DRRRKEDSKARSRLTRREEHSEHHRSGKSRRERERRS.

This is an uncharacterized protein from Ostreid herpesvirus 1 (isolate France) (OsHV-1).